The following is a 132-amino-acid chain: MRDYKQLNGLALAYVGDAIYEIYIRDYLVSLGQTKPNVLHRMATHYVSAKAQASLMQAMLAGEMLTEEEEVMYKRGRNAKSHTFAKNADVTTYRVATGFESLMGYLHLTQQKERLEELINWCIKKVGETNEK.

D17 is a catalytic residue.

It belongs to the MrnC RNase family. Homodimer. Requires Mg(2+) as cofactor.

The protein resides in the cytoplasm. In terms of biological role, involved in correct processing of both the 5' and 3' ends of 23S rRNA precursor. Processes 30S rRNA precursor transcript even in absence of ribonuclease 3 (Rnc); Rnc processes 30S rRNA into smaller rRNA precursors. This Enterococcus faecalis (strain ATCC 700802 / V583) protein is Mini-ribonuclease 3.